We begin with the raw amino-acid sequence, 617 residues long: Chaperone protein HscA homolog (617 aa).

The protein belongs to the heat shock protein 70 family.

Its function is as follows. Chaperone involved in the maturation of iron-sulfur cluster-containing proteins. Has a low intrinsic ATPase activity which is markedly stimulated by HscB. This Vibrio campbellii (strain ATCC BAA-1116) protein is Chaperone protein HscA homolog.